The following is a 277-amino-acid chain: Co-chaperone protein DjlA (277 aa).

At 1 to 6 (MRYWGK) the chain is on the periplasmic side. Residues 7-31 (LLGLVLGVMYAPGVVGALLGLLVGH) traverse the membrane as a helical segment. Residues 32–277 (MVDRALGAKR…DLIKREKGFK (246 aa)) lie on the Cytoplasmic side of the membrane. A J domain is found at 211–277 (DACKVLGVNS…DLIKREKGFK (67 aa)).

As to quaternary structure, homodimer.

The protein localises to the cell inner membrane. In terms of biological role, regulatory DnaK co-chaperone. Direct interaction between DnaK and DjlA is needed for the induction of the wcaABCDE operon, involved in the synthesis of a colanic acid polysaccharide capsule, possibly through activation of the RcsB/RcsC phosphotransfer signaling pathway. The colanic acid capsule may help the bacterium survive conditions outside the host. The protein is Co-chaperone protein DjlA of Yersinia pseudotuberculosis serotype I (strain IP32953).